A 596-amino-acid polypeptide reads, in one-letter code: Adenine deaminase (596 aa).

This sequence belongs to the metallo-dependent hydrolases superfamily. Adenine deaminase family. Requires Mn(2+) as cofactor.

It catalyses the reaction adenine + H2O + H(+) = hypoxanthine + NH4(+). This chain is Adenine deaminase, found in Moorella thermoacetica (strain ATCC 39073 / JCM 9320).